The chain runs to 385 residues: D-alanine--D-alanine ligase (385 aa).

One can recognise an ATP-grasp domain in the interval 165 to 375; the sequence is KRVFTSFGLK…YPELVDRLVE (211 aa). 201–256 serves as a coordination point for ATP; that stretch reads AGEHGWPLFVKPARAGSSIGITKVDDLAGLDEAVAEAQRHDPKIIVEALLRGREIE. 3 residues coordinate Mg(2+): aspartate 329, glutamate 342, and asparagine 344.

It belongs to the D-alanine--D-alanine ligase family. Mg(2+) is required as a cofactor. The cofactor is Mn(2+).

It is found in the cytoplasm. The catalysed reaction is 2 D-alanine + ATP = D-alanyl-D-alanine + ADP + phosphate + H(+). The protein operates within cell wall biogenesis; peptidoglycan biosynthesis. Its function is as follows. Cell wall formation. The protein is D-alanine--D-alanine ligase of Streptomyces avermitilis (strain ATCC 31267 / DSM 46492 / JCM 5070 / NBRC 14893 / NCIMB 12804 / NRRL 8165 / MA-4680).